We begin with the raw amino-acid sequence, 431 residues long: Gamma-glutamyl phosphate reductase (431 aa).

This sequence belongs to the gamma-glutamyl phosphate reductase family.

The protein resides in the cytoplasm. It catalyses the reaction L-glutamate 5-semialdehyde + phosphate + NADP(+) = L-glutamyl 5-phosphate + NADPH + H(+). It participates in amino-acid biosynthesis; L-proline biosynthesis; L-glutamate 5-semialdehyde from L-glutamate: step 2/2. Functionally, catalyzes the NADPH-dependent reduction of L-glutamate 5-phosphate into L-glutamate 5-semialdehyde and phosphate. The product spontaneously undergoes cyclization to form 1-pyrroline-5-carboxylate. The polypeptide is Gamma-glutamyl phosphate reductase (Synechococcus elongatus (strain ATCC 33912 / PCC 7942 / FACHB-805) (Anacystis nidulans R2)).